A 315-amino-acid polypeptide reads, in one-letter code: Gamma-hemolysin component C (315 aa).

The signal sequence occupies residues 1–29 (MLKNKILTTTLSVSLLAPLANPLLENAKA).

Belongs to the aerolysin family. As to quaternary structure, toxicity requires sequential binding and synergistic association of a class S and a class F component which form heterooligomeric complexes. HlgB (class F) associates with either hlgA thus forming an AB toxin or with hlgC thus forming a CB toxin.

It localises to the secreted. Its function is as follows. Toxin that seems to act by forming pores in the membrane of the cell. Has a hemolytic and a leucotoxic activity. This Staphylococcus aureus (strain NCTC 8325 / PS 47) protein is Gamma-hemolysin component C (hlgC).